A 596-amino-acid chain; its full sequence is uncharacterized protein (596 aa).

Basic residues-rich tracts occupy residues 1 to 10 and 18 to 29; these read MRLRSQKRGN and KTRKGKGKKLKP. The disordered stretch occupies residues 1-30; it reads MRLRSQKRGNKFVALPAKTRKGKGKKLKPK.

This is an uncharacterized protein from Magallana gigas (Pacific oyster).